A 686-amino-acid chain; its full sequence is Lysophospholipase 3 (686 aa).

The signal sequence occupies residues Met-1 to Ala-26. Residues Ser-39–Asp-592 form the PLA2c domain. 14 N-linked (GlcNAc...) asparagine glycosylation sites follow: Asn-56, Asn-82, Asn-129, Asn-166, Asn-221, Asn-283, Asn-313, Asn-351, Asn-495, Asn-519, Asn-547, Asn-571, Asn-588, and Asn-614. A lipid anchor (GPI-anchor amidated asparagine) is attached at Asn-659. The propeptide at Ser-660–Val-686 is removed in mature form.

Belongs to the lysophospholipase family.

It localises to the cell membrane. The enzyme catalyses a 1-acyl-sn-glycero-3-phosphocholine + H2O = sn-glycerol 3-phosphocholine + a fatty acid + H(+). In terms of biological role, sequentially removes both fatty acyl groups from diacylglycerophospholipids and therefore has both phospholipase A and lysophospholipase activities. Substrate preference is phosphatidylserine &gt; phosphatidylinositol. Does not cleave phosphatidylcholine, phosphatidylethanolamine, phosphatidic acid and phosphatidylinositol-bisphosphate. Mainly responsible for the degradation of phosphatidylinositol in vivo. The polypeptide is Lysophospholipase 3 (PLB3) (Saccharomyces cerevisiae (strain ATCC 204508 / S288c) (Baker's yeast)).